We begin with the raw amino-acid sequence, 245 residues long: MGRAFEYRKATKLKRWGNMARTFTRIGKQIAIAVKAGGPDPENNPHLRAVVATAKRENMPKDNVERAIKNAMGKDQKDYKEMNYEGYGPFGIAVFVETATDNTTRTVANVRSVFNKFGGTLGTSGSLDFMFSWKSMFTITKKEGVDMDDLILELIDYGVEEEYDEDEDEITLYGDPKSFAQIQKYLEENGFEVKGAEFTRIPNDEKDLTPEQRATIDKMVERLEEDEDVQNVYTNMKPADNEGEE.

Residues 225–245 (EDEDVQNVYTNMKPADNEGEE) form a disordered region.

This sequence belongs to the TACO1 family.

It localises to the cytoplasm. In Bacteroides fragilis (strain ATCC 25285 / DSM 2151 / CCUG 4856 / JCM 11019 / LMG 10263 / NCTC 9343 / Onslow / VPI 2553 / EN-2), this protein is Probable transcriptional regulatory protein BF2589.